A 109-amino-acid polypeptide reads, in one-letter code: Large ribosomal subunit protein uL22 (109 aa).

It belongs to the universal ribosomal protein uL22 family. In terms of assembly, part of the 50S ribosomal subunit.

This protein binds specifically to 23S rRNA; its binding is stimulated by other ribosomal proteins, e.g. L4, L17, and L20. It is important during the early stages of 50S assembly. It makes multiple contacts with different domains of the 23S rRNA in the assembled 50S subunit and ribosome. Functionally, the globular domain of the protein is located near the polypeptide exit tunnel on the outside of the subunit, while an extended beta-hairpin is found that lines the wall of the exit tunnel in the center of the 70S ribosome. This is Large ribosomal subunit protein uL22 from Wolinella succinogenes (strain ATCC 29543 / DSM 1740 / CCUG 13145 / JCM 31913 / LMG 7466 / NCTC 11488 / FDC 602W) (Vibrio succinogenes).